Reading from the N-terminus, the 505-residue chain is Histidine ammonia-lyase (505 aa).

The 5-imidazolinone (Ala-Gly) cross-link spans 141–143; sequence ASG. Ser-142 carries the post-translational modification 2,3-didehydroalanine (Ser).

It belongs to the PAL/histidase family. Contains an active site 4-methylidene-imidazol-5-one (MIO), which is formed autocatalytically by cyclization and dehydration of residues Ala-Ser-Gly.

The protein localises to the cytoplasm. It carries out the reaction L-histidine = trans-urocanate + NH4(+). It participates in amino-acid degradation; L-histidine degradation into L-glutamate; N-formimidoyl-L-glutamate from L-histidine: step 1/3. The protein is Histidine ammonia-lyase of Bacillus cereus (strain ATCC 10987 / NRS 248).